Reading from the N-terminus, the 55-residue chain is Large ribosomal subunit protein bL33B (55 aa).

It belongs to the bacterial ribosomal protein bL33 family.

This chain is Large ribosomal subunit protein bL33B, found in Mycolicibacterium paratuberculosis (strain ATCC BAA-968 / K-10) (Mycobacterium paratuberculosis).